The sequence spans 119 residues: MPRVKRGVTARARHKKVLKLAKGYYGARSRTYRVAVQAVTKAGQYAYRDRRQKKRQFRQLWIARINAASRQNGLSYSRFINGLKKASIEIDRKILADIAVFDKVVFTTLVEKAKEALAK.

It belongs to the bacterial ribosomal protein bL20 family.

Binds directly to 23S ribosomal RNA and is necessary for the in vitro assembly process of the 50S ribosomal subunit. It is not involved in the protein synthesizing functions of that subunit. This chain is Large ribosomal subunit protein bL20, found in Shewanella woodyi (strain ATCC 51908 / MS32).